The primary structure comprises 174 residues: Small hydrophobic protein (174 aa).

A helical transmembrane segment spans residues Val-33–Val-53. Asn-165 is a glycosylation site (N-linked (GlcNAc...) asparagine; by host).

The protein localises to the membrane. The polypeptide is Small hydrophobic protein (SH) (Meleagris gallopavo (Wild turkey)).